A 491-amino-acid polypeptide reads, in one-letter code: Aspartyl/glutamyl-tRNA(Asn/Gln) amidotransferase subunit B (491 aa).

Belongs to the GatB/GatE family. GatB subfamily. In terms of assembly, heterotrimer of A, B and C subunits.

The catalysed reaction is L-glutamyl-tRNA(Gln) + L-glutamine + ATP + H2O = L-glutaminyl-tRNA(Gln) + L-glutamate + ADP + phosphate + H(+). It catalyses the reaction L-aspartyl-tRNA(Asn) + L-glutamine + ATP + H2O = L-asparaginyl-tRNA(Asn) + L-glutamate + ADP + phosphate + 2 H(+). Allows the formation of correctly charged Asn-tRNA(Asn) or Gln-tRNA(Gln) through the transamidation of misacylated Asp-tRNA(Asn) or Glu-tRNA(Gln) in organisms which lack either or both of asparaginyl-tRNA or glutaminyl-tRNA synthetases. The reaction takes place in the presence of glutamine and ATP through an activated phospho-Asp-tRNA(Asn) or phospho-Glu-tRNA(Gln). In Paraburkholderia phytofirmans (strain DSM 17436 / LMG 22146 / PsJN) (Burkholderia phytofirmans), this protein is Aspartyl/glutamyl-tRNA(Asn/Gln) amidotransferase subunit B.